The sequence spans 244 residues: Small ribosomal subunit protein uS2 (244 aa).

The protein belongs to the universal ribosomal protein uS2 family.

In Halalkalibacterium halodurans (strain ATCC BAA-125 / DSM 18197 / FERM 7344 / JCM 9153 / C-125) (Bacillus halodurans), this protein is Small ribosomal subunit protein uS2.